The following is a 260-amino-acid chain: MGQKIHPVGFRLGITHEHQSRWFAVPDRYPELLQEDYKLRQYIEQKLGRLAQNNAGISEVRIERKADQIDLEVRTARPGVVVGRGGQGIESLRTGLQGLLGSNRQIRINVVEVQRVDADAYLIAEYIAQQLERRVSFRRVVRQSIQRAQRAGVQGIKIQVSGRLNGAEIARTEWTREGRVPLHTLRADIDYSYCTAKTVYGILGIKVWVFKGEIIPGQEPDPLPPASRDRERDPRDRDREPRRRQQQRRRQQFEDRSNEG.

A KH type-2 domain is found at 39–114 (LRQYIEQKLG…QIRINVVEVQ (76 aa)). The segment at 217-260 (GQEPDPLPPASRDRERDPRDRDREPRRRQQQRRRQQFEDRSNEG) is disordered. Basic and acidic residues-rich tracts occupy residues 227-243 (SRDR…EPRR) and 251-260 (QQFEDRSNEG).

This sequence belongs to the universal ribosomal protein uS3 family. In terms of assembly, part of the 30S ribosomal subunit. Forms a tight complex with proteins S10 and S14.

Its function is as follows. Binds the lower part of the 30S subunit head. Binds mRNA in the 70S ribosome, positioning it for translation. This chain is Small ribosomal subunit protein uS3, found in Nostoc punctiforme (strain ATCC 29133 / PCC 73102).